The sequence spans 51 residues: MGNAPSRTEPTCDNSINFIIPKENKSYQCYPEQVESNPIDSINSVYFYKTT.

This is an uncharacterized protein from Dictyostelium discoideum (Social amoeba).